The primary structure comprises 156 residues: Endoribonuclease YbeY (156 aa).

Zn(2+) contacts are provided by His117, His121, and His127.

The protein belongs to the endoribonuclease YbeY family. Requires Zn(2+) as cofactor.

Its subcellular location is the cytoplasm. In terms of biological role, single strand-specific metallo-endoribonuclease involved in late-stage 70S ribosome quality control and in maturation of the 3' terminus of the 16S rRNA. In Shewanella frigidimarina (strain NCIMB 400), this protein is Endoribonuclease YbeY.